Here is a 148-residue protein sequence, read N- to C-terminus: UPF0260 protein PM0539 (148 aa).

It belongs to the UPF0260 family.

The protein is UPF0260 protein PM0539 of Pasteurella multocida (strain Pm70).